Consider the following 264-residue polypeptide: Thymidylate synthase (264 aa).

Arginine 21 lines the dUMP pocket. Histidine 51 is a binding site for (6R)-5,10-methylene-5,6,7,8-tetrahydrofolate. 126-127 (RR) contributes to the dUMP binding site. Residue cysteine 146 is the Nucleophile of the active site. DUMP is bound by residues 166 to 169 (RSAD), asparagine 177, and 207 to 209 (HLY). Aspartate 169 lines the (6R)-5,10-methylene-5,6,7,8-tetrahydrofolate pocket. Alanine 263 is a binding site for (6R)-5,10-methylene-5,6,7,8-tetrahydrofolate.

This sequence belongs to the thymidylate synthase family. Bacterial-type ThyA subfamily. As to quaternary structure, homodimer.

It localises to the cytoplasm. The catalysed reaction is dUMP + (6R)-5,10-methylene-5,6,7,8-tetrahydrofolate = 7,8-dihydrofolate + dTMP. The protein operates within pyrimidine metabolism; dTTP biosynthesis. Functionally, catalyzes the reductive methylation of 2'-deoxyuridine-5'-monophosphate (dUMP) to 2'-deoxythymidine-5'-monophosphate (dTMP) while utilizing 5,10-methylenetetrahydrofolate (mTHF) as the methyl donor and reductant in the reaction, yielding dihydrofolate (DHF) as a by-product. This enzymatic reaction provides an intracellular de novo source of dTMP, an essential precursor for DNA biosynthesis. This Azotobacter vinelandii (strain DJ / ATCC BAA-1303) protein is Thymidylate synthase.